We begin with the raw amino-acid sequence, 284 residues long: MKQKVVNIGDIKVANDLPFVLFGGMNVLESRDLAMRICEHYVTVTQKLGIPYVFKASFDKANRSSIHSYRGPGLEEGMKIFQELKQTFGVKVITDVHEASQVQPVADVVDVIQLPAFLARQTDLVEAMAKTGAVINVKKPQFVSPGQMGNIVDKFHEGGNDKVILCDRGANFGYDNLVVDMLGFSVMKKVSGNSPVIFDVTHALQCRDPFGAASGGRRGQVTELARAGMAVGLAGLFLESHPDPANAKCDGPSALPLAKLEQFLTQIKAIDDLVKSFDELDTEN.

The protein belongs to the KdsA family.

Its subcellular location is the cytoplasm. The catalysed reaction is D-arabinose 5-phosphate + phosphoenolpyruvate + H2O = 3-deoxy-alpha-D-manno-2-octulosonate-8-phosphate + phosphate. The protein operates within carbohydrate biosynthesis; 3-deoxy-D-manno-octulosonate biosynthesis; 3-deoxy-D-manno-octulosonate from D-ribulose 5-phosphate: step 2/3. Its pathway is bacterial outer membrane biogenesis; lipopolysaccharide biosynthesis. This chain is 2-dehydro-3-deoxyphosphooctonate aldolase, found in Salmonella paratyphi A (strain ATCC 9150 / SARB42).